The sequence spans 554 residues: Trimethyltridecatetraene synthase (554 aa).

A helical transmembrane segment spans residues 1 to 21; it reads MSAAVALAVILAVYVVLRYIS. C464 lines the heme pocket.

Belongs to the cytochrome P450 family. Heme is required as a cofactor.

The protein resides in the membrane. The catalysed reaction is (6E,10E)-geranyllinalool + reduced [NADPH--hemoprotein reductase] + O2 = (3E,7E)-4,8,12-trimethyltrideca 1,3,7,11-tetraene + but-3-en-2-one + oxidized [NADPH--hemoprotein reductase] + 2 H2O + H(+). The protein operates within secondary metabolite biosynthesis; terpenoid biosynthesis. In terms of biological role, component of the volatile terpenes biosynthesis pathways. Converts mainly geranyllinalool to trimethyltridecatetraene (TMTT). This Zea mays (Maize) protein is Trimethyltridecatetraene synthase.